We begin with the raw amino-acid sequence, 149 residues long: Deoxyuridine 5'-triphosphate nucleotidohydrolase (149 aa).

Residues 68 to 70 (RSG), Asn81, 85 to 87 (LID), and Met95 each bind substrate.

It belongs to the dUTPase family. Mg(2+) is required as a cofactor.

The catalysed reaction is dUTP + H2O = dUMP + diphosphate + H(+). It functions in the pathway pyrimidine metabolism; dUMP biosynthesis; dUMP from dCTP (dUTP route): step 2/2. Functionally, this enzyme is involved in nucleotide metabolism: it produces dUMP, the immediate precursor of thymidine nucleotides and it decreases the intracellular concentration of dUTP so that uracil cannot be incorporated into DNA. This chain is Deoxyuridine 5'-triphosphate nucleotidohydrolase, found in Bordetella pertussis (strain Tohama I / ATCC BAA-589 / NCTC 13251).